A 201-amino-acid polypeptide reads, in one-letter code: Guanylate kinase (201 aa).

One can recognise a Guanylate kinase-like domain in the interval 7–186 (GVLLVLSSPS…SVEEISSILN (180 aa)). 14 to 21 (SPSGAGKT) contributes to the ATP binding site.

Belongs to the guanylate kinase family.

The protein resides in the cytoplasm. It catalyses the reaction GMP + ATP = GDP + ADP. Its function is as follows. Essential for recycling GMP and indirectly, cGMP. The polypeptide is Guanylate kinase (Wolbachia pipientis wMel).